Here is a 396-residue protein sequence, read N- to C-terminus: Homoserine O-acetyltransferase (396 aa).

The AB hydrolase-1 domain occupies N53–E370. S158 serves as the catalytic Nucleophile. R228 contributes to the substrate binding site. Catalysis depends on residues D331 and H364. D365 lines the substrate pocket.

Belongs to the AB hydrolase superfamily. MetX family. In terms of assembly, homodimer.

It localises to the cytoplasm. It catalyses the reaction L-homoserine + acetyl-CoA = O-acetyl-L-homoserine + CoA. It participates in amino-acid biosynthesis; L-methionine biosynthesis via de novo pathway; O-acetyl-L-homoserine from L-homoserine: step 1/1. Transfers an acetyl group from acetyl-CoA to L-homoserine, forming acetyl-L-homoserine. This Gluconobacter oxydans (strain 621H) (Gluconobacter suboxydans) protein is Homoserine O-acetyltransferase.